Here is a 551-residue protein sequence, read N- to C-terminus: Prunin 1 Pru du 6 (551 aa).

A signal peptide spans 1–20 (MAKAFVFSLCLLLVFNGCLA). 2 disulfide bridges follow: Cys32–Cys65 and Cys108–Cys374. A Cupin type-1 1 domain is found at 37–312 (LQAREPDNRI…ALNVNEETAR (276 aa)). Disordered regions lie at residues 111-194 (TFEE…QKTR), 238-293 (NPRK…NVFS), and 329-360 (GNLD…RQQQ). 3 stretches are compositionally biased toward low complexity: residues 114-124 (ESQQSSQQGRQ), 132-148 (QQQQ…QQEQ), and 168-185 (QEQQ…QQFR). Arg194 contributes to the Ca(2+) binding site. A compositionally biased stretch (low complexity) spans 254–275 (QQGQSQPRQQGEQGRPGQHQQP). The span at 282 to 293 (QEQQGNGNNVFS) shows a compositional bias: polar residues. Positions 339-350 (GRQEREHEERQQ) are enriched in basic and acidic residues. The segment covering 351–360 (EQLQQERQQQ) has biased composition (low complexity). Residues 367 to 372 (NGLEET) carry the NGXEET; peptidase recognition motif motif. In terms of domain architecture, Cupin type-1 2 spans 380 to 529 (ENIGNPERAD…AYQISREQAR (150 aa)).

Belongs to the 11S seed storage protein (globulins) family. In terms of assembly, hexamer of two trimers; each subunit is composed of an acidic and a basic chain derived from a single precursor and linked by a disulfide bond. Post-translationally, proteolytically processed from a single precursor to produce an acidic and a basic chain that are linked by a disulfide bond. In terms of tissue distribution, expressed in seed (at protein level). Expressed in seed.

Functionally, seed storage protein. In Prunus dulcis (Almond), this protein is Prunin 1 Pru du 6.